The primary structure comprises 376 residues: Actin-related protein T1 (376 aa).

It belongs to the actin family. In skin, expressed in the basal, spinous and granular layers of the epidermis. Also expressed in hair follicles, sebaceaous glands, eccrine sweat glands and semen.

The protein localises to the cytoplasm. The protein resides in the cytoskeleton. Its subcellular location is the nucleus. It is found in the cytoplasmic vesicle. It localises to the secretory vesicle. The protein localises to the acrosome. Negatively regulates the Hedgehog (SHH) signaling. Binds to the promoter of the SHH signaling mediator, GLI1, and inhibits its expression. In Homo sapiens (Human), this protein is Actin-related protein T1.